A 133-amino-acid polypeptide reads, in one-letter code: Ribonuclease VapC1 (133 aa).

Mg(2+) contacts are provided by Asp-7 and Asp-98.

The protein belongs to the PINc/VapC protein family. Mg(2+) is required as a cofactor.

Its function is as follows. Toxic component of a type II toxin-antitoxin (TA) system. The cognate antitoxin is VapB1. The sequence is that of Ribonuclease VapC1 from Mycobacterium tuberculosis (strain CDC 1551 / Oshkosh).